Here is a 155-residue protein sequence, read N- to C-terminus: SsrA-binding protein (155 aa).

It belongs to the SmpB family.

It localises to the cytoplasm. Functionally, required for rescue of stalled ribosomes mediated by trans-translation. Binds to transfer-messenger RNA (tmRNA), required for stable association of tmRNA with ribosomes. tmRNA and SmpB together mimic tRNA shape, replacing the anticodon stem-loop with SmpB. tmRNA is encoded by the ssrA gene; the 2 termini fold to resemble tRNA(Ala) and it encodes a 'tag peptide', a short internal open reading frame. During trans-translation Ala-aminoacylated tmRNA acts like a tRNA, entering the A-site of stalled ribosomes, displacing the stalled mRNA. The ribosome then switches to translate the ORF on the tmRNA; the nascent peptide is terminated with the 'tag peptide' encoded by the tmRNA and targeted for degradation. The ribosome is freed to recommence translation, which seems to be the essential function of trans-translation. The sequence is that of SsrA-binding protein from Streptococcus pneumoniae (strain P1031).